A 472-amino-acid chain; its full sequence is Bone morphogenetic protein 3 (472 aa).

Residues 1–22 form the signal peptide; that stretch reads MAGASRLLFLWLGCFCVSLAQG. The propeptide occupies 23–362; the sequence is ERPKPPFPEL…EQTLKKARRK (340 aa). A compositionally biased stretch (basic and acidic residues) spans 27 to 37; that stretch reads PPFPELRKAVP. The disordered stretch occupies residues 27–53; that stretch reads PPFPELRKAVPGDRTAGGGPDSELQPQ. N-linked (GlcNAc...) asparagine glycans are attached at residues asparagine 117, asparagine 141, asparagine 175, and asparagine 220. The tract at residues 320–350 is disordered; sequence PYKTLQAQAPEKSKNKKKQRKGPHRKSQTLQ. Residues 333 to 346 are compositionally biased toward basic residues; that stretch reads KNKKKQRKGPHRKS. 3 cysteine pairs are disulfide-bonded: cysteine 370-cysteine 437, cysteine 399-cysteine 469, and cysteine 403-cysteine 471. N-linked (GlcNAc...) asparagine glycosylation is present at asparagine 463.

It belongs to the TGF-beta family. As to quaternary structure, homodimer; disulfide-linked. Interacts with type II receptor ACVR2B. Expressed in adult and fetal cartilage.

Its subcellular location is the secreted. In terms of biological role, growth factor of the TGF-beta superfamily that plays an essential role in developmental process by inducing and patterning early skeletal formation and by negatively regulating bone density. Antagonizes the ability of certain osteogenic BMPs to induce osteoprogenitor differentiation and ossification. Initiates signaling cascades by associating with type II receptor ACVR2B to activate SMAD2-dependent and SMAD-independent signaling cascades including TAK1 and JNK pathways. This Homo sapiens (Human) protein is Bone morphogenetic protein 3 (BMP3).